Consider the following 645-residue polypeptide: Alkyldihydroxyacetonephosphate synthase, peroxisomal (645 aa).

Low complexity predominate over residues M1–G10. The transit peptide at M1–C45 directs the protein to the peroxisome. The segment at M1 to K72 is disordered. Positions A11–R20 are enriched in basic and acidic residues. The segment covering A50–T69 has biased composition (low complexity). Phosphoserine occurs at positions 52 and 57. Phosphothreonine is present on T61. Residue K89 is modified to N6-acetyllysine. Residues F189–T371 enclose the FAD-binding PCMH-type domain. Residues P221–S227, D290–T296, and T303–S306 contribute to the FAD site. An N6-acetyllysine modification is found at K334. E355–I361 contacts FAD. R502 is a binding site for substrate. Y565 acts as the Proton donor/acceptor in catalysis. Important for enzyme activity regions lie at residues H602 to H604 and N641 to L645.

It belongs to the FAD-binding oxidoreductase/transferase type 4 family. Homodimer. It depends on FAD as a cofactor.

It localises to the peroxisome membrane. Its subcellular location is the peroxisome. It carries out the reaction a long chain fatty alcohol + a 1-acylglycerone 3-phosphate = a 1-O-alkylglycerone 3-phosphate + a long-chain fatty acid + H(+). The enzyme catalyses hexadecan-1-ol + 1-hexadecanoylglycerone 3-phosphate = 1-O-hexadecylglycerone 3-phosphate + hexadecanoate + H(+). The catalysed reaction is 1-hexadecanoylglycerone 3-phosphate + a long-chain fatty acid = a 1-acylglycerone 3-phosphate + hexadecanoate. It participates in glycerolipid metabolism; ether lipid biosynthesis. Catalyzes the exchange of the acyl chain in acyl-dihydroxyacetonephosphate (acyl-DHAP) for a long chain fatty alcohol, yielding the first ether linked intermediate, i.e. alkyl-dihydroxyacetonephosphate (alkyl-DHAP), in the pathway of ether lipid biosynthesis. This is Alkyldihydroxyacetonephosphate synthase, peroxisomal (Agps) from Mus musculus (Mouse).